We begin with the raw amino-acid sequence, 405 residues long: POC1 centriolar protein homolog A (405 aa).

WD repeat units follow at residues 17–56, 59–98, 101–140, 143–182, 185–224, 227–266, and 269–308; these read GHRD…RAYR, GHKD…ESTV, AHTA…FLFS, QHIN…CIHS, EHGG…LLQH, LHSA…LLYT, and GHQG…VDYG. The disordered stretch occupies residues 313–352; that stretch reads RRPPPLTSSSGTLPKMDLPVPPGRDRSLESVQGEPQESIS. Residues 341 to 352 show a composition bias toward polar residues; it reads ESVQGEPQESIS. Residues 367–395 adopt a coiled-coil conformation; it reads QLDILTQTVSILEQRLTLTEDRLKQCLEN.

It belongs to the WD repeat POC1 family. As to quaternary structure, interacts with POC1B. In terms of tissue distribution, widely expressed in embryonic and adult tissues.

It is found in the cytoplasm. The protein resides in the cytoskeleton. Its subcellular location is the microtubule organizing center. It localises to the centrosome. The protein localises to the centriole. It is found in the cilium basal body. The protein resides in the spindle pole. Its function is as follows. Plays an important role in centriole assembly and/or stability and ciliogenesis. Involved in early steps of centriole duplication, as well as in the later steps of centriole length control. Acts in concert with POC1B to ensure centriole integrity and proper mitotic spindle formation. This is POC1 centriolar protein homolog A (Poc1a) from Mus musculus (Mouse).